A 124-amino-acid polypeptide reads, in one-letter code: S-adenosylmethionine decarboxylase proenzyme (124 aa).

The Schiff-base intermediate with substrate; via pyruvic acid role is filled by Ser63. The residue at position 63 (Ser63) is a Pyruvic acid (Ser); by autocatalysis. The Proton acceptor; for processing activity role is filled by His68. Residue Cys83 is the Proton donor; for catalytic activity of the active site.

This sequence belongs to the prokaryotic AdoMetDC family. Type 1 subfamily. In terms of assembly, heterotetramer of two alpha and two beta chains arranged as a dimer of alpha/beta heterodimers. It depends on pyruvate as a cofactor. Is synthesized initially as an inactive proenzyme. Formation of the active enzyme involves a self-maturation process in which the active site pyruvoyl group is generated from an internal serine residue via an autocatalytic post-translational modification. Two non-identical subunits are generated from the proenzyme in this reaction, and the pyruvate is formed at the N-terminus of the alpha chain, which is derived from the carboxyl end of the proenzyme. The post-translation cleavage follows an unusual pathway, termed non-hydrolytic serinolysis, in which the side chain hydroxyl group of the serine supplies its oxygen atom to form the C-terminus of the beta chain, while the remainder of the serine residue undergoes an oxidative deamination to produce ammonia and the pyruvoyl group blocking the N-terminus of the alpha chain.

The enzyme catalyses S-adenosyl-L-methionine + H(+) = S-adenosyl 3-(methylsulfanyl)propylamine + CO2. It functions in the pathway amine and polyamine biosynthesis; S-adenosylmethioninamine biosynthesis; S-adenosylmethioninamine from S-adenosyl-L-methionine: step 1/1. Catalyzes the decarboxylation of S-adenosylmethionine to S-adenosylmethioninamine (dcAdoMet), the propylamine donor required for the synthesis of the polyamines spermine and spermidine from the diamine putrescine. This chain is S-adenosylmethionine decarboxylase proenzyme, found in Caldicellulosiruptor bescii (strain ATCC BAA-1888 / DSM 6725 / KCTC 15123 / Z-1320) (Anaerocellum thermophilum).